The chain runs to 940 residues: Translation initiation factor IF-2 (940 aa).

Low complexity-rich tracts occupy residues 138 to 147 and 161 to 208; these read APVEVVAEPE and PVVV…ITEL. Residues 138-354 form a disordered region; that stretch reads APVEVVAEPE…DRQTFQAPTE (217 aa). Composition is skewed to basic and acidic residues over residues 214-271 and 289-311; these read IAAR…EEAA and AKAD…DGAK. The tr-type G domain maps to 440 to 609; it reads PRAPVVTVMG…LLQAEVLELT (170 aa). Residues 449–456 form a G1 region; it reads GHVDHGKT. Residue 449–456 participates in GTP binding; sequence GHVDHGKT. Positions 474 to 478 are G2; that stretch reads GITQH. The interval 495–498 is G3; that stretch reads DTPG. GTP is bound by residues 495-499 and 549-552; these read DTPGH and TKID. The interval 549 to 552 is G4; sequence TKID. The interval 585-587 is G5; it reads SAK.

It belongs to the TRAFAC class translation factor GTPase superfamily. Classic translation factor GTPase family. IF-2 subfamily.

It localises to the cytoplasm. In terms of biological role, one of the essential components for the initiation of protein synthesis. Protects formylmethionyl-tRNA from spontaneous hydrolysis and promotes its binding to the 30S ribosomal subunits. Also involved in the hydrolysis of GTP during the formation of the 70S ribosomal complex. The protein is Translation initiation factor IF-2 of Azoarcus sp. (strain BH72).